A 695-amino-acid chain; its full sequence is MAP kinase phosphatase with leucine-rich repeats protein 2 (695 aa).

LRR repeat units follow at residues 101-122 (SLKS…ITLL), 124-145 (NLNH…LSQL), 147-167 (SLET…NVCK), 170-191 (SLTS…FLNL), 193-214 (NLKD…LPNN), 215-235 (IEKL…SLIR), 239-260 (SLTT…LSCL), 262-283 (NVKT…VLGS), 286-307 (SLVT…VILL), and 309-330 (NLRI…IPTE). Low complexity predominate over residues 413-426 (SENNEINENNQLLT). Disordered regions lie at residues 413 to 438 (SENN…KNDS) and 492 to 519 (QEQL…QQQQ). The region spanning 556-695 (VPDLIIDKLY…LKKFEKDLFK (140 aa)) is the Tyrosine-protein phosphatase domain. Catalysis depends on C639, which acts as the Phosphocysteine intermediate.

It belongs to the protein-tyrosine phosphatase family. Non-receptor class dual specificity subfamily.

It catalyses the reaction O-phospho-L-tyrosyl-[protein] + H2O = L-tyrosyl-[protein] + phosphate. The catalysed reaction is O-phospho-L-seryl-[protein] + H2O = L-seryl-[protein] + phosphate. The enzyme catalyses O-phospho-L-threonyl-[protein] + H2O = L-threonyl-[protein] + phosphate. Functionally, probable phosphatase with dual specificity toward Ser/Thr and Tyr-containing proteins. The polypeptide is MAP kinase phosphatase with leucine-rich repeats protein 2 (mpl2) (Dictyostelium discoideum (Social amoeba)).